Consider the following 237-residue polypeptide: Phosphoribosylaminoimidazole-succinocarboxamide synthase (237 aa).

It belongs to the SAICAR synthetase family.

It catalyses the reaction 5-amino-1-(5-phospho-D-ribosyl)imidazole-4-carboxylate + L-aspartate + ATP = (2S)-2-[5-amino-1-(5-phospho-beta-D-ribosyl)imidazole-4-carboxamido]succinate + ADP + phosphate + 2 H(+). It functions in the pathway purine metabolism; IMP biosynthesis via de novo pathway; 5-amino-1-(5-phospho-D-ribosyl)imidazole-4-carboxamide from 5-amino-1-(5-phospho-D-ribosyl)imidazole-4-carboxylate: step 1/2. This is Phosphoribosylaminoimidazole-succinocarboxamide synthase from Methanosarcina mazei (strain ATCC BAA-159 / DSM 3647 / Goe1 / Go1 / JCM 11833 / OCM 88) (Methanosarcina frisia).